We begin with the raw amino-acid sequence, 347 residues long: Selenide, water dikinase (347 aa).

Cys17 is a catalytic residue. Residues Lys20 and 48 to 50 (TRD) contribute to the ATP site. Asp51 contributes to the Mg(2+) binding site. Residues Asp68, Asp91, and 139–141 (GHS) contribute to the ATP site. Position 91 (Asp91) interacts with Mg(2+). Asp227 provides a ligand contact to Mg(2+).

Belongs to the selenophosphate synthase 1 family. Class I subfamily. As to quaternary structure, homodimer. Mg(2+) serves as cofactor.

The enzyme catalyses hydrogenselenide + ATP + H2O = selenophosphate + AMP + phosphate + 2 H(+). Synthesizes selenophosphate from selenide and ATP. This Salmonella typhi protein is Selenide, water dikinase.